The primary structure comprises 257 residues: Thioesterase frbE (257 aa).

The protein belongs to the AMT4 thioesterase family.

The protein operates within antifungal biosynthesis. Functionally, thioesterase; part of the gene cluster that mediates the biosynthesis of the antifungal antibiotic FR901469, an inhibitor of beta-1,3-glucansynthase, exerting antifungal activity against the pathogenes Candida albicans and Aspergillus fumigatus. FR901469 is a cyclic depsipeptide containing 12 amino acid residues and a fatty acid chain. The NRPS frbI contains 12 modules responsible for the formation of the depsipeptide backbone which is denoted as Acyl-Thr-Ala-Tyr-Val-4OHPro-Thr-Thr-3OHPro-threo3OHGln-Gly-Thr-Orn-OH (C71H116N14O23). The PKS frbB is probably involved in the production of the hydrocarbon chain, and the acyl-CoA ligase frbC might be involved in the transport of the chain to the peptide ptoduct of frbI. Because FR901469 contains 3 hydroxylated amino acid residues, the 3 oxygenases frbA, frbH, and frbJ might be participating in amino acid hydroxylation. As no thioesterase domains were detected in frbI or frbB, the thioesterases frbD and frbE may instead release and cyclize the products of the NRPS and PKS, respectively. The protein is Thioesterase frbE of Dothideomycetidae sp. (strain 11243) (Fungal sp. (strain No.11243)).